A 208-amino-acid chain; its full sequence is 3-demethoxyubiquinol 3-hydroxylase (208 aa).

Glutamate 57, glutamate 87, histidine 90, glutamate 139, glutamate 171, and histidine 174 together coordinate Fe cation.

It belongs to the COQ7 family. The cofactor is Fe cation.

It is found in the cell membrane. The catalysed reaction is a 5-methoxy-2-methyl-3-(all-trans-polyprenyl)benzene-1,4-diol + AH2 + O2 = a 3-demethylubiquinol + A + H2O. It participates in cofactor biosynthesis; ubiquinone biosynthesis. In terms of biological role, catalyzes the hydroxylation of 2-nonaprenyl-3-methyl-6-methoxy-1,4-benzoquinol during ubiquinone biosynthesis. This is 3-demethoxyubiquinol 3-hydroxylase from Nitrosomonas europaea (strain ATCC 19718 / CIP 103999 / KCTC 2705 / NBRC 14298).